The primary structure comprises 507 residues: MLRVPLLVLCLALSVGADYYGYGWGRNGGGGGSGGGSGSSRASASASASARANSIGNLVGRLTSLVDASASARASASANAGGFGGSGAGGSGGNGFGGGSGGSGFGGGSGGSGFGGGSGGSGFGGGSGGSGFGGGSGGSGFGGGSGGSGFGGASASASAQALASATAELQAAQDAYDQASAYAEATARAAANGGSLDSSALASAIASAEASVSARGASIIARARARAEATVRAARRSFASAQASAEASVSAVRSAEGRARSFARAVARARASARAAIAGVRSSGRAFASATARARASVSAAARAVARARAQAVARARASIRASASASARASASAAAEARAAAYARVQVAAAAAARAAASAASASASASASGSSFGSGGSGGSGNGGFGSFGASANAVANAFAQAFGGGLGNGGNGGNGNGGNGGNGGNGNGGNGGNGNGGNGGNGNGGNGGNGGNGNGGNGGNGNGGNGRNGNGGNGRNGNGGNGGNGNGRNGRGGRYYYGSSDYYY.

The first 17 residues, 1 to 17 (MLRVPLLVLCLALSVGA), serve as a signal peptide directing secretion. A coiled-coil region spans residues 158–185 (SAQALASATAELQAAQDAYDQASAYAEA). Residues 462 to 498 (GNGNGGNGRNGNGGNGRNGNGGNGGNGNGRNGRGGRY) show a composition bias toward gly residues. The interval 462 to 507 (GNGNGGNGRNGNGGNGRNGNGGNGGNGNGRNGRGGRYYYGSSDYYY) is disordered.

As to expression, component of the acid-soluble and acid-insoluble organic matrix of calcified shell layers (at protein level).

It is found in the secreted. This chain is Glycine, alanine and asparagine-rich protein, found in Haliotis asinina (Donkey's ear abalone).